A 503-amino-acid polypeptide reads, in one-letter code: Potassium voltage-gated channel subfamily V member 1 (503 aa).

Disordered regions lie at residues 1 to 20 (MDLS…DSGS) and 171 to 192 (KKDT…QGPC). Over 3–213 (LSPRNRPLLD…EKPGSSTAAR (211 aa)) the chain is Cytoplasmic. Residues 10 to 20 (LLDSSSLDSGS) show a composition bias toward low complexity. A compositionally biased stretch (basic and acidic residues) spans 171-184 (KKDTDDQESQHESE). The helical transmembrane segment at 214-234 (IFGVISIIFVAVSIVNMALMS) threads the bilayer. At 235 to 241 (AELSWLN) the chain is on the extracellular side. Residues 242–262 (LQLLEILEYVCISWFTGEFIL) traverse the membrane as a helical segment. At 263–279 (RFLCVKDRCHFLRKVPN) the chain is on the cytoplasmic side. A helical membrane pass occupies residues 280-300 (IIDLLAILPFYITLLVESLSG). At 301–312 (SHTTQELENVGR) the chain is on the extracellular side. The chain crosses the membrane as a helical; Voltage-sensor span at residues 313 to 334 (LVQVLRLLRALRMLKLGRHSTG). Over 335–348 (LRSLGMTITQCYEE) the chain is Cytoplasmic. Residues 349 to 369 (VGLLLLFLSVGISIFSTIEYF) form a helical membrane-spanning segment. The short motif at 395-400 (TVGYGD) is the Selectivity filter element. A helical membrane pass occupies residues 410-430 (IVAFMCILSGILVLALPIAII). At 431 to 503 (NDRFSACYFT…RSSGGDDFWF (73 aa)) the chain is on the cytoplasmic side.

This sequence belongs to the potassium channel family. V (TC 1.A.1.2) subfamily. Kv8.1/KCNV1 sub-subfamily. As to quaternary structure, heteromultimer with KCNB1 and KCNB2. Interacts with KCNC4 and KCND1. Detected in brain, in neocortex, olfactory tubercle, hippocampus, dentate gyrus, piriform cortex and amygdala. Detected in Purkinje cells and granular cells of the cerebellum, in hippocampal CA4 neurons and neocortex pyramidal cells.

The protein resides in the cell membrane. Functionally, potassium channel subunit that does not form functional channels by itself. Modulates KCNB1 and KCNB2 channel activity by shifting the threshold for inactivation to more negative values and by slowing the rate of inactivation. Can down-regulate the channel activity of KCNB1, KCNB2, KCNC4 and KCND1, possibly by trapping them in intracellular membranes. This chain is Potassium voltage-gated channel subfamily V member 1 (Kcnv1), found in Rattus norvegicus (Rat).